A 272-amino-acid chain; its full sequence is uncharacterized protein (272 aa).

The disordered stretch occupies residues Cys-101–Glu-130. The segment covering Pro-110 to Leu-125 has biased composition (low complexity). Position 142 is a phosphoserine (Ser-142).

This is an uncharacterized protein from Arabidopsis thaliana (Mouse-ear cress).